A 486-amino-acid chain; its full sequence is Malonate-semialdehyde dehydrogenase 1 (486 aa).

NAD(+)-binding residues include F154, K178, E181, R182, and S231. The Nucleophile role is filled by C286. Residue E386 participates in NAD(+) binding.

This sequence belongs to the aldehyde dehydrogenase family. IolA subfamily. In terms of assembly, homotetramer.

It catalyses the reaction 3-oxopropanoate + NAD(+) + CoA + H2O = hydrogencarbonate + acetyl-CoA + NADH + H(+). The enzyme catalyses 2-methyl-3-oxopropanoate + NAD(+) + CoA + H2O = propanoyl-CoA + hydrogencarbonate + NADH + H(+). The protein operates within polyol metabolism; myo-inositol degradation into acetyl-CoA; acetyl-CoA from myo-inositol: step 7/7. Its function is as follows. Catalyzes the oxidation of malonate semialdehyde (MSA) and methylmalonate semialdehyde (MMSA) into acetyl-CoA and propanoyl-CoA, respectively. Is involved in a myo-inositol catabolic pathway. Bicarbonate, and not CO2, is the end-product of the enzymatic reaction. This is Malonate-semialdehyde dehydrogenase 1 from Bacillus anthracis.